We begin with the raw amino-acid sequence, 325 residues long: Porphobilinogen deaminase (325 aa).

C253 is subject to S-(dipyrrolylmethanemethyl)cysteine.

This sequence belongs to the HMBS family. The cofactor is dipyrromethane.

It carries out the reaction 4 porphobilinogen + H2O = hydroxymethylbilane + 4 NH4(+). Its pathway is porphyrin-containing compound metabolism; protoporphyrin-IX biosynthesis; coproporphyrinogen-III from 5-aminolevulinate: step 2/4. Tetrapolymerization of the monopyrrole PBG into the hydroxymethylbilane pre-uroporphyrinogen in several discrete steps. This Dictyostelium discoideum (Social amoeba) protein is Porphobilinogen deaminase (hemC).